The primary structure comprises 224 residues: Ribonuclease 3 (224 aa).

The RNase III domain occupies 4–126 (LDRLQHKIGY…IIGAMSLDSN (123 aa)). Glu39 is a Mg(2+) binding site. The active site involves Asp43. 2 residues coordinate Mg(2+): Asp112 and Glu115. The active site involves Glu115. The 71-residue stretch at 153–223 (DPKTRLQEYL…AEQILKVLDI (71 aa)) folds into the DRBM domain.

Belongs to the ribonuclease III family. As to quaternary structure, homodimer. Requires Mg(2+) as cofactor.

The protein resides in the cytoplasm. The enzyme catalyses Endonucleolytic cleavage to 5'-phosphomonoester.. Digests double-stranded RNA. Involved in the processing of primary rRNA transcript to yield the immediate precursors to the large and small rRNAs (23S and 16S). Processes some mRNAs, and tRNAs when they are encoded in the rRNA operon. Processes pre-crRNA and tracrRNA of type II CRISPR loci if present in the organism. This chain is Ribonuclease 3, found in Actinobacillus succinogenes (strain ATCC 55618 / DSM 22257 / CCUG 43843 / 130Z).